The following is a 509-amino-acid chain: Telomeric repeat-binding factor 2-interacting protein 1 (509 aa).

The BRCT domain occupies 1–91 (MAALGGLTHS…KLLDVDDYRL (91 aa)). The tract at residues 93 to 168 (GSHGRPRKSQ…RKKENKMDCS (76 aa)) is disordered. Over residues 115–127 (VGESSQESDQKQQ) the composition is skewed to polar residues. Positions 159 to 168 (RKKENKMDCS) are enriched in basic and acidic residues. A Myb-like domain is found at 185–239 (RRNVFTEKEDVAIMLYVRENAPHRGTGVSLWKEMEQKQVVKRTWQAIKNRYFRYL). Disordered regions lie at residues 249-359 (LTDD…ENQD) and 399-423 (DLPS…ESEG). Basic and acidic residues-rich tracts occupy residues 286–296 (GVAEKTGEKLS) and 321–344 (VEER…KSTE). The segment covering 401–418 (PSSQSQTQVDEVSSSPDA) has biased composition (polar residues). A Nuclear localization signal motif is present at residues 493–509 (QKYGADNVAKRVAFLAS).

It belongs to the RAP1 family. As to quaternary structure, homodimer. Component of the shelterin complex (telosome). Interacts with terf2; the interaction is direct.

It is found in the nucleus. It localises to the chromosome. The protein localises to the telomere. Its function is as follows. Acts both as a regulator of telomere function and as a transcription regulator. Involved in the regulation of telomere length and protection as a component of the shelterin complex (telosome). Does not bind DNA directly: recruited to telomeric double-stranded 5'-TTAGGG-3' repeats via its interaction with terf2. Independently of its function in telomeres, also acts as a transcription regulator: recruited to extratelomeric 5'-TTAGGG-3' sites via its association with terf2 or other factors, and regulates gene expression. This is Telomeric repeat-binding factor 2-interacting protein 1 (terf2ip) from Xenopus tropicalis (Western clawed frog).